The chain runs to 67 residues: Putative selenoprotein YdfZ (67 aa).

Position 52 is an S-selanylcysteine (C52).

This chain is Putative selenoprotein YdfZ (ydfZ), found in Escherichia coli O6:H1 (strain CFT073 / ATCC 700928 / UPEC).